Consider the following 350-residue polypeptide: C5a anaphylatoxin chemotactic receptor 1 (350 aa).

The Extracellular portion of the chain corresponds to 1–37 (MDSFDYTTPDYGHYDDKDTLDLNTPVDKTSNTLRVPD). The interval 10-18 (DYGHYDDKD) is required for CHIPS binding. Residues Tyr11 and Tyr14 each carry the sulfotyrosine modification. The involved in C5a binding stretch occupies residues 21 to 30 (DLNTPVDKTS). The helical transmembrane segment at 38-64 (ILALVIFAVVFLVGVLGNALVVWVTAF) threads the bilayer. At 65–69 (EAKRT) the chain is on the cytoplasmic side. The helical transmembrane segment at 70-93 (INAIWFLNLAVADFLSCLALPILF) threads the bilayer. Residues 94 to 110 (TSIVQHHHWPFGGAACS) are Extracellular-facing. A disulfide bridge connects residues Cys109 and Cys188. Residues 111 to 132 (ILPSLILLNMYASILLLATISA) traverse the membrane as a helical segment. The Cytoplasmic segment spans residues 133–153 (DRFLLVFKPIWCQNFRGAGLA). Residues 154 to 174 (WIACAVAWGLALLLTIPSFLY) form a helical membrane-spanning segment. Over 175 to 200 (RVVREEYFPPKVLCGVDYSHDKRRER) the chain is Extracellular. The chain crosses the membrane as a helical span at residues 201 to 226 (AVAIVRLVLGFLWPLLTLMICYTFIL). Residues 227–242 (LRTWSRRATRSTKTLK) are Cytoplasmic-facing. A helical transmembrane segment spans residues 243–265 (VVVAVVASFFIFWLPYQVTGIMM). Over 266–282 (SFLEPSSPTFRLLKKLD) the chain is Extracellular. A helical membrane pass occupies residues 283–303 (SLCVSFAYINCCINPIIYVVA). Residues 304–350 (GQGFQGRLQKSLPSLLRNVLTEESVVRESKSFARSTVDTMADKTQAV) lie on the Cytoplasmic side of the membrane. Residues Ser314, Ser317, Ser327, Ser332, Ser334, and Ser338 each carry the phosphoserine modification.

This sequence belongs to the G-protein coupled receptor 1 family. As to quaternary structure, homodimer. May also form higher-order oligomers. Interacts (when phosphorylated) with ARRB1 and ARRB2; the interaction is associated with internalization of C5aR. Interacts (via N-terminal domain) with S.aureus chemotaxis inhibitory protein (CHIPS); the interaction blocks the receptor and may thus inhibit the immune response. Post-translationally, sulfation plays a critical role in the association of C5aR with C5a, but no significant role in the ability of the receptor to transduce a signal and mobilize calcium in response to a small peptide agonist. Sulfation at Tyr-14 is important for CHIPS binding. Phosphorylated on serine residues in response to C5a binding, resulting in internalization of the receptor and short-term desensitization to C5a.

The protein resides in the cell membrane. Its subcellular location is the cytoplasmic vesicle. In terms of biological role, receptor for the chemotactic and inflammatory peptide anaphylatoxin C5a. The ligand interacts with at least two sites on the receptor: a high-affinity site on the extracellular N-terminus, and a second site in the transmembrane region which activates downstream signaling events. Receptor activation stimulates chemotaxis, granule enzyme release, intracellular calcium release and superoxide anion production. This is C5a anaphylatoxin chemotactic receptor 1 (C5AR1) from Pan troglodytes (Chimpanzee).